Here is a 477-residue protein sequence, read N- to C-terminus: Mitochondrial adenyl nucleotide antiporter SLC25A24 (477 aa).

Residues 1–174 (MHQLIRKFVF…RYWKKSTVLD (174 aa)) are regulatory N-terminal domain. The Mitochondrial intermembrane segment spans residues 1-198 (MHQLIRKFVF…EKTTGMWWKQ (198 aa)). The EF-hand 1 domain maps to 20–55 (DNTKSFAELFEKLDVNKDGKVDVSELKTGLAAMGFS). Ca(2+) contacts are provided by D33, N35, D37, K39, E44, D69, D71, D73, E80, D100, N102, D104, R106, E111, D136, D138, T140, T142, and E147. EF-hand domains follow at residues 87-122 (EHEK…LGIN) and 123-158 (LSDK…NPAE). The tract at residues 160–169 (LQQIIRYWKK) is linker region. Residues 175-477 (IGDSLTIPDE…YMRSGLGISK (303 aa)) form a C-terminal transmembrane transporter domain region. Solcar repeat units lie at residues 193-279 (GMWW…YKKL), 287-372 (VQSH…LKNT), and 384-472 (PGVL…MRSG). A helical transmembrane segment spans residues 199–216 (LAAGGVAGAVSRTGTAPL). Residues 217–253 (DRMKVFMQVHSSKTNKISLVNGFKQMIKEGGVASLWR) are Mitochondrial matrix-facing. The chain crosses the membrane as a helical span at residues 254 to 273 (GNGVNVIKIAPETAIKFMAY). The Mitochondrial intermembrane portion of the chain corresponds to 274-296 (EQYKKLLSKDGGKVQSHERFMAG). A helical membrane pass occupies residues 297–310 (SLAGATAQTAIYPM). At 311–346 (EVMKTRLTLRKTGQYSGMFDCAKKILRKEGVKAFYK) the chain is on the mitochondrial matrix side. A helical transmembrane segment spans residues 347 to 366 (GYVPNILGIIPYAGIDLAVY). Residues 367–389 (ETLKNTWLSHYAKDTANPGVLVL) are Mitochondrial intermembrane-facing. The helical transmembrane segment at 390–407 (LGCGTISSTCGQLASYPL) threads the bilayer. Topologically, residues 408–446 (ALIRTRMQAMASMEGSEQVSMSKLVKKIMQKEGFFGLYR) are mitochondrial matrix. A helical transmembrane segment spans residues 447–466 (GILPNFMKVIPAVSISYVVY). Residues 467-477 (EYMRSGLGISK) lie on the Mitochondrial intermembrane side of the membrane.

This sequence belongs to the mitochondrial carrier (TC 2.A.29) family. As to quaternary structure, monomer.

It localises to the mitochondrion inner membrane. It carries out the reaction Mg(2+)(out) + phosphate(in) + ATP(out) = Mg(2+)(in) + phosphate(out) + ATP(in). It catalyses the reaction ADP(out) + phosphate(in) + H(+)(out) = ADP(in) + phosphate(out) + H(+)(in). The catalysed reaction is AMP(out) + phosphate(in) = AMP(in) + phosphate(out). The enzyme catalyses phosphate(in) + ATP(out) + 2 H(+)(out) = phosphate(out) + ATP(in) + 2 H(+)(in). It carries out the reaction dADP(in) + ADP(out) = dADP(out) + ADP(in). It catalyses the reaction Mg(2+)(in) + ADP(out) + ATP(in) + H(+)(out) = Mg(2+)(out) + ADP(in) + ATP(out) + H(+)(in). The catalysed reaction is ADP(out) + diphosphate(in) = ADP(in) + diphosphate(out). The enzyme catalyses dAMP(in) + ADP(out) + H(+)(out) = dAMP(out) + ADP(in) + H(+)(in). It carries out the reaction 3'-AMP(in) + ADP(out) + H(+)(out) = 3'-AMP(out) + ADP(in) + H(+)(in). It catalyses the reaction dAMP(out) + phosphate(in) = dAMP(in) + phosphate(out). The catalysed reaction is 3'-AMP(out) + phosphate(in) = 3'-AMP(in) + phosphate(out). The enzyme catalyses dADP(out) + phosphate(in) + H(+)(out) = dADP(in) + phosphate(out) + H(+)(in). With respect to regulation, activated by an increase in cytosolic calcium levels that induce a conformational change of the N-terminal regulatory domain, uncapping the channel and allowing transport. Inhibited by bathophenanthroline, mersalyl, p-hydroxymercuribenzoate, bromcresol purple and tannic acid. Functionally, electroneutral antiporter that mediates the transport of adenyl nucleotides through the inner mitochondrial membrane. Originally identified as an ATP-magnesium/inorganic phosphate antiporter, it also acts as a broad specificity adenyl nucleotide antiporter. By regulating the mitochondrial matrix adenyl nucleotide pool could adapt to changing cellular energetic demands and indirectly regulate adenyl nucleotide-dependent metabolic pathways. The protein is Mitochondrial adenyl nucleotide antiporter SLC25A24 (slc25a24) of Danio rerio (Zebrafish).